We begin with the raw amino-acid sequence, 205 residues long: MSKRHSQKYKIDRRMGENLWGRPKSPVNSRSYGPGQHGQRRKTKMSDFGLQLMAKQKLKGYYGNITEKQFRRTYDEASRRKGNTAELLIGLLESRLDAIVYRCKFVPTVFASRQFVNHGHVKVNGIKVNIPSYRCKPGDVIEVRERSRSMALVLEALDSPERDLPEYIDLDAKAMKATFVRMPEFSEVPYAVQMEPNLVIEFYSS.

Positions 1-44 (MSKRHSQKYKIDRRMGENLWGRPKSPVNSRSYGPGQHGQRRKTK) are disordered. Positions 94-173 (SRLDAIVYRC…LPEYIDLDAK (80 aa)) constitute an S4 RNA-binding domain.

This sequence belongs to the universal ribosomal protein uS4 family. In terms of assembly, part of the 30S ribosomal subunit. Contacts protein S5. The interaction surface between S4 and S5 is involved in control of translational fidelity.

Functionally, one of the primary rRNA binding proteins, it binds directly to 16S rRNA where it nucleates assembly of the body of the 30S subunit. Its function is as follows. With S5 and S12 plays an important role in translational accuracy. The polypeptide is Small ribosomal subunit protein uS4 (Maricaulis maris (strain MCS10) (Caulobacter maris)).